Consider the following 100-residue polypeptide: Osteocalcin (100 aa).

The N-terminal stretch at 1 to 23 is a signal peptide; that stretch reads MRTPMLLALLALATLCLAGRADA. Positions 24 to 51 are excised as a propeptide; the sequence is KPGDAESGKGAAFVSKQEGSEVVKRLRR. Residues 52–98 form the Gla domain; that stretch reads YLDHWLGAPAPYPDPLEPKREVCELNPDCDELADHIGFQEAYRRFYG. Residue Pro-60 is modified to 4-hydroxyproline. Residues Glu-68, Glu-72, Glu-75, and Asp-81 each coordinate Ca(2+). 4-carboxyglutamate is present on residues Glu-68, Glu-72, and Glu-75. Cys-74 and Cys-80 are joined by a disulfide.

The protein belongs to the osteocalcin/matrix Gla protein family. In terms of processing, gamma-carboxyglutamate residues are formed by vitamin K dependent carboxylation by GGCX. These residues are essential for the binding of calcium. Decarboxylation promotes the hormone activity.

The protein resides in the secreted. The carboxylated form is one of the main organic components of the bone matrix, which constitutes 1-2% of the total bone protein. It acts as a negative regulator of bone formation and is required to limit bone formation without impairing bone resorption or mineralization. The carboxylated form binds strongly to apatite and calcium. Its function is as follows. The uncarboxylated form acts as a hormone secreted by osteoblasts, which regulates different cellular processes, such as energy metabolism, male fertility and brain development. Regulates of energy metabolism by acting as a hormone favoring pancreatic beta-cell proliferation, insulin secretion and sensitivity and energy expenditure. Uncarboxylated osteocalcin hormone also promotes testosterone production in the testes: acts as a ligand for G protein-coupled receptor GPRC6A at the surface of Leydig cells, initiating a signaling response that promotes the expression of enzymes required for testosterone synthesis in a CREB-dependent manner. Also acts as a regulator of brain development: osteocalcin hormone crosses the blood-brain barrier and acts as a ligand for GPR158 on neurons, initiating a signaling response that prevents neuronal apoptosis in the hippocampus, favors the synthesis of all monoamine neurotransmitters and inhibits that of gamma-aminobutyric acid (GABA). Osteocalcin also crosses the placenta during pregnancy and maternal osteocalcin is required for fetal brain development. The chain is Osteocalcin (BGLAP) from Bos taurus (Bovine).